The sequence spans 122 residues: Large ribosomal subunit protein uL14 (122 aa).

The protein belongs to the universal ribosomal protein uL14 family. Part of the 50S ribosomal subunit. Forms a cluster with proteins L3 and L19. In the 70S ribosome, L14 and L19 interact and together make contacts with the 16S rRNA in bridges B5 and B8.

Binds to 23S rRNA. Forms part of two intersubunit bridges in the 70S ribosome. This Sulfurihydrogenibium sp. (strain YO3AOP1) protein is Large ribosomal subunit protein uL14.